A 511-amino-acid chain; its full sequence is MKNVSRLLPLLPGIALLTGCNQKVQKDNGQNSQKPNIIYIFADDLGIGDLSCYGATKVSTPHIDRLAGQGVQFTNAYATSATSTPSRFGLLTGMYPWRQENTGIAPGNSELIIDTACVTMADMLKEAGYATGVVGKWHLGLGPKGGTDFNGHITPNAQSIGFDYEFVIPATVDRVPCVFVENGHVVGLDPNDPITVNYEHKVGDWPTGEENPELVKLKPSQGHNNTIINGIPRIGWMTGGKSALWKDEDIADIITNKAKSFIVSHKEEPFFLYMGTQDVHVPRVPHPRFAGKSGLGTRGDVILQLDWTIGEIMNTLDSLQLTDNTILIFTSDNGPVIDDGYQDQAFERLNGHTPMGIYRGGKYSAYEAGTRIPFIVRWPAKVKPNKQQALFSQIDIFASLAALLKQPLPEDAAPDSQEHLNTLLGKDYTSREYIVQQNLNNTLAIVKGQWKYIEPSDAPAIEYWTKMELGNDRHPQLYDLSADPSEKNNVAKQHPEVVRELSELLESVKTR.

Residue serine 83 is modified to 3-oxoalanine (Ser).

This sequence belongs to the sulfatase family. The conversion to 3-oxoalanine (also known as C-formylglycine, FGly), of a serine or cysteine residue in prokaryotes and of a cysteine residue in eukaryotes, is critical for catalytic activity.

Its function is as follows. Exosulfatase involved in the degradation of the glycosaminoglycans (GAGs) chondroitin sulfate (CS) and dermatan sulfate (DS). Catalyzes the hydrolysis of the 6-sulfate groups of the N-acetyl-D-galactosamine 6-sulfate units. GAG-specific sulfatases play a key role in the persistence of the major human gut symbiont B.thetaiotaomicron in the host gastrointestinal tract. The protein is N-acetylgalactosamine-6-O-sulfatase of Bacteroides thetaiotaomicron (strain ATCC 29148 / DSM 2079 / JCM 5827 / CCUG 10774 / NCTC 10582 / VPI-5482 / E50).